The following is a 315-amino-acid chain: 4-hydroxy-3-methylbut-2-enyl diphosphate reductase (315 aa).

Cys-12 lines the [4Fe-4S] cluster pocket. Positions 41 and 74 each coordinate (2E)-4-hydroxy-3-methylbut-2-enyl diphosphate. Dimethylallyl diphosphate-binding residues include His-41 and His-74. His-41 and His-74 together coordinate isopentenyl diphosphate. [4Fe-4S] cluster is bound at residue Cys-96. Position 124 (His-124) interacts with (2E)-4-hydroxy-3-methylbut-2-enyl diphosphate. Residue His-124 coordinates dimethylallyl diphosphate. His-124 lines the isopentenyl diphosphate pocket. The active-site Proton donor is Glu-126. Residue Thr-168 participates in (2E)-4-hydroxy-3-methylbut-2-enyl diphosphate binding. Cys-198 contributes to the [4Fe-4S] cluster binding site. 4 residues coordinate (2E)-4-hydroxy-3-methylbut-2-enyl diphosphate: Ser-226, Ser-227, Asn-228, and Ser-270. Residues Ser-226, Ser-227, Asn-228, and Ser-270 each coordinate dimethylallyl diphosphate. The isopentenyl diphosphate site is built by Ser-226, Ser-227, Asn-228, and Ser-270.

It belongs to the IspH family. It depends on [4Fe-4S] cluster as a cofactor.

The catalysed reaction is isopentenyl diphosphate + 2 oxidized [2Fe-2S]-[ferredoxin] + H2O = (2E)-4-hydroxy-3-methylbut-2-enyl diphosphate + 2 reduced [2Fe-2S]-[ferredoxin] + 2 H(+). The enzyme catalyses dimethylallyl diphosphate + 2 oxidized [2Fe-2S]-[ferredoxin] + H2O = (2E)-4-hydroxy-3-methylbut-2-enyl diphosphate + 2 reduced [2Fe-2S]-[ferredoxin] + 2 H(+). It functions in the pathway isoprenoid biosynthesis; dimethylallyl diphosphate biosynthesis; dimethylallyl diphosphate from (2E)-4-hydroxy-3-methylbutenyl diphosphate: step 1/1. The protein operates within isoprenoid biosynthesis; isopentenyl diphosphate biosynthesis via DXP pathway; isopentenyl diphosphate from 1-deoxy-D-xylulose 5-phosphate: step 6/6. Functionally, catalyzes the conversion of 1-hydroxy-2-methyl-2-(E)-butenyl 4-diphosphate (HMBPP) into a mixture of isopentenyl diphosphate (IPP) and dimethylallyl diphosphate (DMAPP). Acts in the terminal step of the DOXP/MEP pathway for isoprenoid precursor biosynthesis. In Pseudomonas syringae pv. tomato (strain ATCC BAA-871 / DC3000), this protein is 4-hydroxy-3-methylbut-2-enyl diphosphate reductase.